We begin with the raw amino-acid sequence, 512 residues long: MKEYQIHLELDRSQQHNFLYPLLFREYIYALAHDHGLNRSTIPLENGGYDNKSSSLSVKRLISRTYQRIHLSIYAKDSNPNQFIGHNNKFYSQMISEGFSVIVEIPFSLRLVAFLEGKEMAKSQNFQSIHSIFPFFENNFSHLHYVLDVLIPYPIRPEILVRTFRYWVKDASSLHLLRFFLHEYFNWNSLITPKKSNSIFSTRNPRFFLFLYNSHVYEYESIFFFLRNQSSHLRSTSSGPLFERISFYGKVEDLVQVFVNDFQDNLWLFKHPIMHYVRYQGKSVLASKDMPLLMNKWKYYLVNLWQWHFHVWSQPGRIHINHLYKDYIDFLGYLSRGRLNTLVVRSQMLENAFLIDNAMKQFETTVPIIPLIGSLTTARFCNSLGHPISKPTWADSSDSYIIDRFMRICRNLSHYHSGSSKKKSLYRIKYILRVSCVKSLVRKHKSTVRVFLKRLGSEFLEEFFTEEEHVLSLIFPRALFTSRRLYRGRVWYLDIICINDLVNHDKLEIVPN.

Belongs to the intron maturase 2 family. MatK subfamily.

The protein resides in the plastid. Its subcellular location is the chloroplast. Its function is as follows. Usually encoded in the trnK tRNA gene intron. Probably assists in splicing its own and other chloroplast group II introns. In Acer platanoides (Norway maple), this protein is Maturase K.